The primary structure comprises 177 residues: Alpha-crystallin B chain (177 aa).

M1 is subject to N-acetylmethionine. One can recognise a sHSP domain in the interval 58–166 (RMPSWAQTGL…PERSVPISRD (109 aa)). 5 residues coordinate Zn(2+): H85, H106, E108, H113, and H121. Residues 155 to 169 (DVPERSVPISRDEKP) are compositionally biased toward basic and acidic residues. The disordered stretch occupies residues 155–177 (DVPERSVPISRDEKPAVAGPQQK).

The protein belongs to the small heat shock protein (HSP20) family. In terms of assembly, heteromer composed of three CRYAA and one CRYAB subunits. Aggregates with homologous proteins, including the small heat shock protein HSPB1, to form large heteromeric complexes. Inter-subunit bridging via zinc ions enhances stability, which is crucial as there is no protein turn over in the lens. Interacts with HSPBAP1 and TTN/titin.

Functionally, may contribute to the transparency and refractive index of the lens. The chain is Alpha-crystallin B chain (CRYAB) from Squalus acanthias (Spiny dogfish).